Consider the following 773-residue polypeptide: Carnitine O-palmitoyltransferase 1, liver isoform (773 aa).

The residue at position 2 (Ala2) is an N-acetylalanine. The Cytoplasmic segment spans residues 2–47; it reads AEAHQAVAFQFTVTPDGIDLRLSHEALRQIYLSGLHSWKKKFIRFK. Residues 48–73 form a helical membrane-spanning segment; it reads NGIITGVYPASPSSWLIVVVGVMTTM. The Mitochondrial intermembrane portion of the chain corresponds to 74–102; sequence YAKIDPSLGIIAKINRTLETANCMSSQTK. Residues 103–122 form a helical membrane-spanning segment; that stretch reads NVVSGVLFGTGLWVALIVTM. Residues 123–773 are Cytoplasmic-facing; it reads RYSLKVLLSY…LFGLSSNSKK (651 aa). A 3'-nitrotyrosine modification is found at Tyr282. His473 serves as the catalytic Proton acceptor. 555–567 contributes to the CoA binding site; that stretch reads GKGIIKKCRTSPD. Thr588 carries the post-translational modification Phosphothreonine. Position 589 is a 3'-nitrotyrosine (Tyr589). (R)-carnitine is bound by residues Tyr589 and Thr602. Phosphothreonine is present on Thr604. Residues Ser741 and Ser747 each carry the phosphoserine modification.

It belongs to the carnitine/choline acetyltransferase family. In terms of assembly, homohexamer and homotrimer. Identified in a complex that contains at least CPT1A, ACSL1 and VDAC1. Also identified in complexes with ACSL1 and VDAC2 and VDAC3. Interacts with ZDHHC4. In terms of tissue distribution, strong expression in kidney and heart, and lower in liver and skeletal muscle.

The protein resides in the mitochondrion outer membrane. The enzyme catalyses (R)-carnitine + hexadecanoyl-CoA = O-hexadecanoyl-(R)-carnitine + CoA. It catalyses the reaction succinyl-CoA + L-lysyl-[protein] = N(6)-succinyl-L-lysyl-[protein] + CoA + H(+). The protein operates within lipid metabolism; fatty acid beta-oxidation. With respect to regulation, inhibited by malonyl-CoA. Its function is as follows. Catalyzes the transfer of the acyl group of long-chain fatty acid-CoA conjugates onto carnitine, an essential step for the mitochondrial uptake of long-chain fatty acids and their subsequent beta-oxidation in the mitochondrion. Also possesses a lysine succinyltransferase activity that can regulate enzymatic activity of substrate proteins such as ENO1 and metabolism independent of its classical carnitine O-palmitoyltransferase activity. Plays an important role in hepatic triglyceride metabolism. Also plays a role in inducible regulatory T-cell (iTreg) differentiation once activated by butyryl-CoA that antagonizes malonyl-CoA-mediated CPT1A repression. Sustains the IFN-I response by recruiting ZDHCC4 to palmitoylate MAVS at the mitochondria leading to MAVS stabilization and activation. Promotes ROS-induced oxidative stress in liver injury via modulation of NFE2L2 and NLRP3-mediated signaling pathways. The chain is Carnitine O-palmitoyltransferase 1, liver isoform from Homo sapiens (Human).